The sequence spans 200 residues: ADP-ribose 1''-phosphate phosphatase (200 aa).

The Macro domain occupies 1-200; it reads MDPPSVRSKI…EVTVVRPHGG (200 aa). Substrate-binding positions include 15–17, 29–31, 36–41, and 169–175; these read GDL, ACN, WGKGIA, and FNAGLFG.

Belongs to the POA1 family.

It carries out the reaction ADP-alpha-D-ribose 1''-phosphate + H2O = ADP-D-ribose + phosphate. Functionally, highly specific phosphatase involved in the metabolism of ADP-ribose 1''-phosphate (Appr1p) which is produced as a consequence of tRNA splicing. The chain is ADP-ribose 1''-phosphate phosphatase (poa1) from Aspergillus fumigatus (strain ATCC MYA-4609 / CBS 101355 / FGSC A1100 / Af293) (Neosartorya fumigata).